The following is a 359-amino-acid chain: Phospho-N-acetylmuramoyl-pentapeptide-transferase (359 aa).

10 consecutive transmembrane segments (helical) span residues 3-23, 55-75, 80-100, 117-137, 156-176, 187-207, 231-251, 255-275, 280-300, and 334-354; these read QILI…PVLI, VAIL…GLAF, IGAS…VGFI, TAKT…VLQF, IATV…IVSA, LDGL…LITF, LALI…WNAA, IFMG…LSVT, ILAV…VLQI, and FWLL…GEWL.

It belongs to the glycosyltransferase 4 family. MraY subfamily. The cofactor is Mg(2+).

It localises to the cell membrane. It catalyses the reaction UDP-N-acetyl-alpha-D-muramoyl-L-alanyl-gamma-D-glutamyl-meso-2,6-diaminopimeloyl-D-alanyl-D-alanine + di-trans,octa-cis-undecaprenyl phosphate = di-trans,octa-cis-undecaprenyl diphospho-N-acetyl-alpha-D-muramoyl-L-alanyl-D-glutamyl-meso-2,6-diaminopimeloyl-D-alanyl-D-alanine + UMP. Its pathway is cell wall biogenesis; peptidoglycan biosynthesis. Catalyzes the initial step of the lipid cycle reactions in the biosynthesis of the cell wall peptidoglycan: transfers peptidoglycan precursor phospho-MurNAc-pentapeptide from UDP-MurNAc-pentapeptide onto the lipid carrier undecaprenyl phosphate, yielding undecaprenyl-pyrophosphoryl-MurNAc-pentapeptide, known as lipid I. The sequence is that of Phospho-N-acetylmuramoyl-pentapeptide-transferase from Mycobacterium tuberculosis (strain ATCC 25177 / H37Ra).